A 71-amino-acid polypeptide reads, in one-letter code: Bowman-Birk type trypsin inhibitor (71 aa).

Intrachain disulfides connect cysteine 10–cysteine 67, cysteine 11–cysteine 27, cysteine 14–cysteine 63, cysteine 17–cysteine 25, cysteine 35–cysteine 42, and cysteine 39–cysteine 55.

The protein belongs to the Bowman-Birk serine protease inhibitor family.

Its function is as follows. Inhibits trypsin but not chymotrypsin. This chain is Bowman-Birk type trypsin inhibitor, found in Triticum aestivum (Wheat).